We begin with the raw amino-acid sequence, 299 residues long: Taste receptor type 2 member 5 (299 aa).

Methionine 1 is a topological domain (extracellular). Residues 2-22 traverse the membrane as a helical segment; that stretch reads LSAGLGLLMLVAVIEFLIGLI. The Cytoplasmic segment spans residues 23–45; sequence GNGILVVWSLREWIRKFSWSSYN. Residues 46 to 66 traverse the membrane as a helical segment; the sequence is LIILGLAGCRFLLQWLIILDL. Residues 67 to 82 lie on the Extracellular side of the membrane; sequence SLFPLFQSSSWLRYLN. The helical transmembrane segment at 83–103 threads the bilayer; sequence VFWVLVSQASLWFATFLSVFY. Residues 104–127 lie on the Cytoplasmic side of the membrane; it reads CKKITTFDRPAYLWLKQRAYNLSL. Residues 128–148 form a helical membrane-spanning segment; the sequence is WCLLGYFIISLLLTVQVGLTV. Residues 149-175 are Extracellular-facing; sequence HHPPQGNSSIRYPFEHWQYLYVFQLNS. A glycan (N-linked (GlcNAc...) asparagine) is linked at asparagine 155. Residues 176–196 form a helical membrane-spanning segment; it reads GSYLPLMVFLVSSGMLIISLY. Topologically, residues 197 to 223 are cytoplasmic; that stretch reads THHKKMKVHSAGRRDARAKAHITALKS. The helical transmembrane segment at 224–244 threads the bilayer; it reads LGCFLLLHLVYIVASPFSITS. Topologically, residues 245–253 are extracellular; it reads KTYPPDLTS. Residues 254-274 traverse the membrane as a helical segment; sequence VFIWETLMAAYPSLHSLMLIM. At 275–299 the chain is on the cytoplasmic side; that stretch reads GIPRVKQTCQKILWKTVCARRCWGP.

Belongs to the G-protein coupled receptor T2R family.

The protein resides in the membrane. In terms of biological role, receptor that may play a role in the perception of bitterness and is gustducin-linked. May play a role in sensing the chemical composition of the gastrointestinal content. The activity of this receptor may stimulate alpha gustducin, mediate PLC-beta-2 activation and lead to the gating of TRPM5. This chain is Taste receptor type 2 member 5 (TAS2R5), found in Papio hamadryas (Hamadryas baboon).